The chain runs to 965 residues: Phosphatidylethanolamine N-methyltransferase (965 aa).

Residues 1-55 (MSSSAADPFAARLNSDVRQRHPTASATSKNVEGTSQQKQQQQQQQSEANAAASRV) are disordered. Residues 1–91 (MSSSAADPFA…DPREPKNLSD (91 aa)) are Lumenal-facing. The span at 22–35 (PTASATSKNVEGTS) shows a compositional bias: polar residues. The segment covering 36–45 (QQKQQQQQQQ) has biased composition (low complexity). A helical membrane pass occupies residues 92-112 (VAVLAIIALHFLAAYYLPWGV). Residues 113–115 (KRP) lie on the Cytoplasmic side of the membrane. The helical transmembrane segment at 116-136 (LFAAIFMFWRLAYNVGIGYLL) threads the bilayer. Residues 137-201 (TIQSKYKLLV…EYNTWLTFRR (65 aa)) are Lumenal-facing. A helical membrane pass occupies residues 202–222 (VVDLILMCDFISYCLFAIVCA). The Cytoplasmic portion of the chain corresponds to 223–229 (HKPDGEG). A helical transmembrane segment spans residues 230–250 (LFMCFARWAAGITLVGFNLWV). Topologically, residues 251–279 (KLDAHRVVKDYAWYWGDFFYLIEQELTFD) are lumenal. Residues 280 to 300 (GVFELAPHPMYSIGYAGYYGI) traverse the membrane as a helical segment. At 301–306 (SMMAAS) the chain is on the cytoplasmic side. The helical transmembrane segment at 307-327 (YDVLFISIIAHAAQFAFLVIV) threads the bilayer. The Lumenal segment spans residues 328–389 (ENPHIEKTYN…IGLKNLDFFR (62 aa)). The helical transmembrane segment at 390–410 (ITDVAIVLLCAYLAVVTMVTP) threads the bilayer. At 411 to 417 (NTRFYQA) the chain is on the cytoplasmic side. Residues 418-438 (LFVLHALAWRLWYSAGLGVIL) form a helical membrane-spanning segment. At 439–467 (TMQSEEKMFTRHFLKYGESVGEAWRQWKG) the chain is on the lumenal side. The helical transmembrane segment at 468–488 (IYHLSNCLCHASFIAASYKMY) threads the bilayer. Residues 489-496 (EFPADWTY) are Cytoplasmic-facing. Residues 497 to 517 (GWALLKHVVGLSLIALQVWTA) form a helical membrane-spanning segment. The Lumenal segment spans residues 518–573 (TSIYESLGEFGWFYGDFFFDSKRQLTYTSIYRFLNNPERVFGTAGLWGAALITWSR). Residues 574-594 (AIFLMALAGHFLTLAFLAYVE) form a helical membrane-spanning segment. The Cytoplasmic segment spans residues 595–965 (KPHMQKVYGR…TTPVDSKFSE (371 aa)).

Belongs to the class VI-like SAM-binding methyltransferase superfamily. CHO2 family.

Its subcellular location is the endoplasmic reticulum membrane. It carries out the reaction a 1,2-diacyl-sn-glycero-3-phosphoethanolamine + S-adenosyl-L-methionine = a 1,2-diacyl-sn-glycero-3-phospho-N-methylethanolamine + S-adenosyl-L-homocysteine + H(+). The protein operates within phospholipid metabolism; phosphatidylcholine biosynthesis. Catalyzes the first step of the methylation pathway of phosphatidylcholine biosynthesis, the SAM-dependent methylation of phosphatidylethanolamine (PE) to phosphatidylmonomethylethanolamine (PMME). This chain is Phosphatidylethanolamine N-methyltransferase, found in Neurospora crassa (strain ATCC 24698 / 74-OR23-1A / CBS 708.71 / DSM 1257 / FGSC 987).